The sequence spans 524 residues: Zinc finger protein GLIS2 (524 aa).

The interaction with CTNND1 stretch occupies residues 35-174 (ALHRELGLVD…PKQLVCRWAK (140 aa)). Disordered regions lie at residues 39–62 (ELGL…FLLN) and 84–114 (SPPS…VPSA). The transcription activation stretch occupies residues 71-137 (GRFSAAPLVD…SSFQFFLPLG (67 aa)). Residues 84–100 (SPPSGLDSPNGSSSLSP) show a composition bias toward low complexity. A transcription repression region spans residues 148–171 (SFLTPPKDKCLSPDLPLPKQLVCR). The C2H2-type 1 zinc-finger motif lies at 168-193 (LVCRWAKCNQLFELLQDLVDHVNDYH). The C2H2-type 2; atypical zinc-finger motif lies at 202 to 229 (YCCHWEGCARHGRGFNARYKMLIHIRTH). 3 C2H2-type zinc fingers span residues 235–257 (HRCP…NRSH), 263–287 (YVCP…TRTH), and 293–317 (YYCK…IKAH). The interval 439–480 (GGKAEGEKGRGSVPTRALGMEGHKTPLERTESSCSRPSPDGL) is disordered. A compositionally biased stretch (basic and acidic residues) spans 459-469 (EGHKTPLERTE).

It belongs to the GLI C2H2-type zinc-finger protein family. In terms of assembly, interacts with CTBP1 and HDAC3. Interacts with CTNNB1. Interacts with SUFU. Interacts with CTNND1. In terms of processing, C-terminus cleavage is induced by interaction with CTNND1 and enhanced by Src tyrosine kinase. Expressed at high levels in kidney and at low levels in heart, lung and placenta. Expressed in colon.

Its subcellular location is the nucleus speckle. The protein localises to the cytoplasm. In terms of biological role, can act either as a transcriptional repressor or as a transcriptional activator, depending on the cell context. Acts as a repressor of the Hedgehog signaling pathway. Represses the Hedgehog-dependent expression of Wnt4. Necessary to maintain the differentiated epithelial phenotype in renal cells through the inhibition of SNAI1, which itself induces the epithelial-to-mesenchymal transition. Represses transcriptional activation mediated by CTNNB1 in the Wnt signaling pathway. May act by recruiting the corepressors CTBP1 and HDAC3. May be involved in neuron differentiation. The protein is Zinc finger protein GLIS2 (GLIS2) of Homo sapiens (Human).